A 900-amino-acid chain; its full sequence is MKASEEEYRLNFFIKNDFKRKICKSCKTPFWTRDEKKEYCSDIPCTDYYFFDINIKSQPLTVKEAREKFLSFFEKRGHTRISPKPVLARWRDDLYLTIASIVDFQPHVTSGLVPPPANPLVVSQPSIRLEDIDNVGITFGRHLTTFEMAAHHAFNYPDHYVYWKDETTAYATEFFTKELGIPEEELNFKESWWEGGGNAGPCLEVTVGGLELATLVFMQYKITDNGNYTPLKLKIVDTGYGVERIAWITQKTPSAFHAIYGNLVYKFFNKIGVAYIDETLLKVASRFAGKIDPDNPDTIKIHRQMVSKELGIDIKAVEEELDRAAKVFQILDHTKTIMLMLADGLVPSNSGEGYLGRLVIRRALKVLRLLKSDVRLYELVKEQIDFWKEDFPQVLKNKDYILDAVELEQQRFEKILEKVPSIASTLARKSEITTEDLIQVYDSNGIPPDLLEEELKKKSVKFELPRNFYALVAKRHQTSTIKSVYDKVKLPKDMLEYITALQPTEKLYYKDQYMRSFEGKVLGVYKNYLILDKTTFYPEGGGQLGDTGLIIDEKSSKRYEVIDTQKVNDVIVHILKEEPSTIKVGDNVRGEINWERRYRLMRHHTVTHVILAAAKKVLGEHVWQAGAEKTPEKGRLDITHHKTLTEEEVKLIENYANSVISDRRPVKPLEMNRMEAEMKYGVSIYEGGVPNSATIRLLEIKDWDIESCGGTHVSNTSEIGAVKIINVERIQDGVIRLEYVAGPALVDYIRETEAKIVEASKIIGSSPDQLTSRLRRLLNEIEEKNNLIIQYRRIIETELLNNLKPYEINGNKIYIIEGLGDEEENKEILRKLTSTDNTIAISISDNRLQIATSKNMRVDKIVEELLKGGGKGGGKGTFANVILNSKKSKEEIIEIVRKSL.

Residues His-604, His-608, Cys-708, and His-712 each coordinate Zn(2+).

Belongs to the class-II aminoacyl-tRNA synthetase family. Zn(2+) serves as cofactor.

The protein resides in the cytoplasm. The enzyme catalyses tRNA(Ala) + L-alanine + ATP = L-alanyl-tRNA(Ala) + AMP + diphosphate. In terms of biological role, catalyzes the attachment of alanine to tRNA(Ala) in a two-step reaction: alanine is first activated by ATP to form Ala-AMP and then transferred to the acceptor end of tRNA(Ala). Also edits incorrectly charged Ser-tRNA(Ala) and Gly-tRNA(Ala) via its editing domain. This chain is Alanine--tRNA ligase, found in Saccharolobus islandicus (strain M.14.25 / Kamchatka #1) (Sulfolobus islandicus).